The chain runs to 406 residues: Acetate kinase (406 aa).

Asn-7 is a binding site for Mg(2+). Lys-14 serves as a coordination point for ATP. Position 90 (Arg-90) interacts with substrate. The active-site Proton donor/acceptor is Asp-147. Residues 207 to 211, 283 to 285, and 331 to 335 each bind ATP; these read HLGNG, DMR, and GVGEN. Glu-385 lines the Mg(2+) pocket.

The protein belongs to the acetokinase family. Homodimer. Mg(2+) is required as a cofactor. Mn(2+) serves as cofactor.

Its subcellular location is the cytoplasm. The catalysed reaction is acetate + ATP = acetyl phosphate + ADP. Its pathway is metabolic intermediate biosynthesis; acetyl-CoA biosynthesis; acetyl-CoA from acetate: step 1/2. Functionally, catalyzes the formation of acetyl phosphate from acetate and ATP. Can also catalyze the reverse reaction. This Thermosipho melanesiensis (strain DSM 12029 / CIP 104789 / BI429) protein is Acetate kinase.